The sequence spans 275 residues: Hydroxyethylthiazole kinase (275 aa).

M50 is a substrate binding site. Residues R126 and S171 each contribute to the ATP site. A200 serves as a coordination point for substrate.

This sequence belongs to the Thz kinase family. The cofactor is Mg(2+).

The enzyme catalyses 5-(2-hydroxyethyl)-4-methylthiazole + ATP = 4-methyl-5-(2-phosphooxyethyl)-thiazole + ADP + H(+). Its pathway is cofactor biosynthesis; thiamine diphosphate biosynthesis; 4-methyl-5-(2-phosphoethyl)-thiazole from 5-(2-hydroxyethyl)-4-methylthiazole: step 1/1. Catalyzes the phosphorylation of the hydroxyl group of 4-methyl-5-beta-hydroxyethylthiazole (THZ). This chain is Hydroxyethylthiazole kinase, found in Acinetobacter baumannii (strain AB307-0294).